The sequence spans 361 residues: Chorismate synthase (361 aa).

Residues 40–49 (DLQHDLDRRR) show a composition bias toward basic and acidic residues. Positions 40 to 60 (DLQHDLDRRRPGTSRHTTQRR) are disordered. Residues arginine 48 and arginine 54 each contribute to the NADP(+) site. Residues 125–127 (RSS), 237–238 (NA), glycine 277, 292–296 (KPTSS), and arginine 318 each bind FMN.

The protein belongs to the chorismate synthase family. Homotetramer. The cofactor is FMNH2.

The enzyme catalyses 5-O-(1-carboxyvinyl)-3-phosphoshikimate = chorismate + phosphate. It participates in metabolic intermediate biosynthesis; chorismate biosynthesis; chorismate from D-erythrose 4-phosphate and phosphoenolpyruvate: step 7/7. Catalyzes the anti-1,4-elimination of the C-3 phosphate and the C-6 proR hydrogen from 5-enolpyruvylshikimate-3-phosphate (EPSP) to yield chorismate, which is the branch point compound that serves as the starting substrate for the three terminal pathways of aromatic amino acid biosynthesis. This reaction introduces a second double bond into the aromatic ring system. In Chromohalobacter salexigens (strain ATCC BAA-138 / DSM 3043 / CIP 106854 / NCIMB 13768 / 1H11), this protein is Chorismate synthase.